Consider the following 229-residue polypeptide: MPKHGKRYRALLEKVDPNKVYTIDEAARLVKELATAKFDETVEVHAKLGIDPRRSDQNVRGTVSLPHGLGKQVRVLAIAKGEKIKEAEEAGADYVGGEEIIQKILDGWMDFDAVVATPDVMGAVGSKLGRILGPRGLLPNPKAGTVGFNIGEIIREIKAGRIEFRNDKTGAIHAPVGKASFPPEKLADNIRAFIRALEAHKPEGAKGTFLRSVYVTTTMGPSVRINPHS.

Part of the 50S ribosomal subunit.

Directly binds to 23S rRNA. Forms what is known as the L1 stalk, which protrudes beyond the 70S ribosome surface. The stalk is preferentially stabilized in 70S versus 50S crystals. Interacts with the E site tRNA, blocking the exit path. This blockage implies that this section of the ribosome must be able to move to release the deacetylated tRNA. Its function is as follows. Protein L1 is also a translational repressor protein, it controls the translation of the L11 operon by binding to its mRNA. In Thermus thermophilus (strain ATCC 27634 / DSM 579 / HB8), this protein is Large ribosomal subunit protein uL1 (rplA).